A 456-amino-acid polypeptide reads, in one-letter code: uncharacterized protein (456 aa).

Basic and acidic residues-rich tracts occupy residues 181 to 210 (DQRK…DKKV) and 217 to 231 (KEIE…ENEE). The disordered stretch occupies residues 181–231 (DQRKESIVNDERKKNPEFREKPDKNEDKKVKPPPSLKEIENKGIDHEENEE). Residues 216-248 (LKEIENKGIDHEENEEDKKRELMFKLQLLQKQY) are a coiled coil. Residues 347–365 (LALAILFNAVWFIAAKMIM) form a helical membrane-spanning segment. Polar residues predominate over residues 383–407 (NKSGTTPNSVSPRTWGNSKSPQSEF). The disordered stretch occupies residues 383–456 (NKSGTTPNSV…MREQGIETLK (74 aa)). Basic and acidic residues predominate over residues 441–456 (DESRREMREQGIETLK).

It belongs to the IIV-6 067R family.

The protein resides in the membrane. This is an uncharacterized protein from Invertebrate iridescent virus 6 (IIV-6).